The sequence spans 1437 residues: CRISPR-associated endoribonuclease Cas13a (1437 aa).

HEPN-like fold stretches follow at residues 460-626 (LNAS…AMFE) and 1101-1437 (EFRD…QLKN). The interval 1377–1419 (EVKEKKKPSDNNTGKGYSKRDRQQDRKEYDKYKEKKKKEGNFL) is disordered. A compositionally biased stretch (basic and acidic residues) spans 1394–1416 (SKRDRQQDRKEYDKYKEKKKKEG).

It belongs to the CRISPR-associated endoribonuclease Cas13a family. Requires a divalent metal cation as cofactor.

Target RNA acts as an activator for non-specific ssRNA degradation. In terms of biological role, CRISPR (clustered regularly interspaced short palindromic repeat), is an adaptive immune system that provides protection against mobile genetic elements (viruses, transposable elements and conjugative plasmids). CRISPR clusters contain sequences complementary to antecedent mobile elements and target invading nucleic acids. Unlike many single-component effectors, this CRISPR-Cas system targets RNA. CRISPR clusters are transcribed from pre-CRISPR RNA (crRNA) and processed into crRNA by this protein. Cleaves linear target ssRNA in a pre-crRNA-dependent fashion, preferentially around A residues. Binding a viable target RNA target activates this protein for non-specific RNA degradation in vitro (called collateral RNA degradation), but it is not very sensitive as it requires nanomolar levels of viable target RNA. In Lachnospiraceae bacterium (strain NK4A179), this protein is CRISPR-associated endoribonuclease Cas13a.